A 122-amino-acid chain; its full sequence is Small ribosomal subunit protein uS13 (122 aa).

The disordered stretch occupies residues 95-122 (GLPVHGQRTKTNARTRKGPARTVAGKKK).

The protein belongs to the universal ribosomal protein uS13 family. In terms of assembly, part of the 30S ribosomal subunit. Forms a loose heterodimer with protein S19. Forms two bridges to the 50S subunit in the 70S ribosome.

Its function is as follows. Located at the top of the head of the 30S subunit, it contacts several helices of the 16S rRNA. In the 70S ribosome it contacts the 23S rRNA (bridge B1a) and protein L5 of the 50S subunit (bridge B1b), connecting the 2 subunits; these bridges are implicated in subunit movement. Contacts the tRNAs in the A and P-sites. This chain is Small ribosomal subunit protein uS13, found in Geotalea uraniireducens (strain Rf4) (Geobacter uraniireducens).